We begin with the raw amino-acid sequence, 304 residues long: Oxygen-dependent coproporphyrinogen-III oxidase (304 aa).

Ser-94 contacts substrate. His-98 and His-108 together coordinate a divalent metal cation. His-108 (proton donor) is an active-site residue. 110-112 (NVR) is a binding site for substrate. The a divalent metal cation site is built by His-147 and His-177. Residues 242–277 (YVEFNLVYDRGTLFGLQTGGRTESILMSMPPLVRWE) form an important for dimerization region. 260 to 262 (GGR) serves as a coordination point for substrate.

This sequence belongs to the aerobic coproporphyrinogen-III oxidase family. Homodimer. A divalent metal cation is required as a cofactor.

It is found in the cytoplasm. The enzyme catalyses coproporphyrinogen III + O2 + 2 H(+) = protoporphyrinogen IX + 2 CO2 + 2 H2O. The protein operates within porphyrin-containing compound metabolism; protoporphyrin-IX biosynthesis; protoporphyrinogen-IX from coproporphyrinogen-III (O2 route): step 1/1. Its function is as follows. Involved in the heme biosynthesis. Catalyzes the aerobic oxidative decarboxylation of propionate groups of rings A and B of coproporphyrinogen-III to yield the vinyl groups in protoporphyrinogen-IX. This chain is Oxygen-dependent coproporphyrinogen-III oxidase, found in Shewanella halifaxensis (strain HAW-EB4).